The following is a 203-amino-acid chain: Dephospho-CoA kinase (203 aa).

The DPCK domain occupies 4–201 (IIGLTGGIGS…RKYLMLARKH (198 aa)). 12–17 (GSGKTR) contacts ATP.

Belongs to the CoaE family.

It localises to the cytoplasm. The catalysed reaction is 3'-dephospho-CoA + ATP = ADP + CoA + H(+). It functions in the pathway cofactor biosynthesis; coenzyme A biosynthesis; CoA from (R)-pantothenate: step 5/5. Catalyzes the phosphorylation of the 3'-hydroxyl group of dephosphocoenzyme A to form coenzyme A. This Nitrosomonas europaea (strain ATCC 19718 / CIP 103999 / KCTC 2705 / NBRC 14298) protein is Dephospho-CoA kinase.